We begin with the raw amino-acid sequence, 318 residues long: NADH-ubiquinone oxidoreductase chain 1 (318 aa).

8 helical membrane passes run 2–22 (FLIN…FLTL), 69–89 (FLFT…WAPL), 102–122 (LLFI…SGWA), 146–166 (MTTI…TAFA), 171–191 (HLWL…STLA), 222–242 (LFFM…VILF), 253–273 (EIST…FLWV), and 294–314 (LPLT…LACI).

Belongs to the complex I subunit 1 family. Core subunit of respiratory chain NADH dehydrogenase (Complex I) which is composed of 45 different subunits.

Its subcellular location is the mitochondrion inner membrane. It catalyses the reaction a ubiquinone + NADH + 5 H(+)(in) = a ubiquinol + NAD(+) + 4 H(+)(out). Its function is as follows. Core subunit of the mitochondrial membrane respiratory chain NADH dehydrogenase (Complex I) which catalyzes electron transfer from NADH through the respiratory chain, using ubiquinone as an electron acceptor. Essential for the catalytic activity and assembly of complex I. The chain is NADH-ubiquinone oxidoreductase chain 1 (MT-ND1) from Elephas maximus (Indian elephant).